The following is a 691-amino-acid chain: Elongation factor G (691 aa).

The tr-type G domain maps to 8-282; the sequence is DRVRNIGIAA…AVVDYLPAPI (275 aa). GTP-binding positions include 17-24, 81-85, and 135-138; these read AHIDAGKT, DTPGH, and NKMD.

This sequence belongs to the TRAFAC class translation factor GTPase superfamily. Classic translation factor GTPase family. EF-G/EF-2 subfamily.

The protein resides in the cytoplasm. In terms of biological role, catalyzes the GTP-dependent ribosomal translocation step during translation elongation. During this step, the ribosome changes from the pre-translocational (PRE) to the post-translocational (POST) state as the newly formed A-site-bound peptidyl-tRNA and P-site-bound deacylated tRNA move to the P and E sites, respectively. Catalyzes the coordinated movement of the two tRNA molecules, the mRNA and conformational changes in the ribosome. This is Elongation factor G from Synechococcus sp. (strain RCC307).